The sequence spans 145 residues: UPF0299 membrane protein plu1549 (145 aa).

Transmembrane regions (helical) follow at residues 6-26, 34-54, 65-85, and 95-115; these read VLIVGWQYLRAFVLIYLCLLT, LPIIIPGSIIGMLILFVLLAF, GCSLLLKNMTLLFLPIGVGVM, and IIPIVFSCLISTAIVMIIVAY.

This sequence belongs to the UPF0299 family.

Its subcellular location is the cell inner membrane. The protein is UPF0299 membrane protein plu1549 of Photorhabdus laumondii subsp. laumondii (strain DSM 15139 / CIP 105565 / TT01) (Photorhabdus luminescens subsp. laumondii).